The following is a 432-amino-acid chain: MKYLIKNAHVIDPANKIDGLKDILIENGKIAAVENKIEDNAAKIIDAKGLTAMPGFVDMHTHLREPGQEGKETIFTGTKAALKGGFTTVCMMPNTNPAMDSKNNLAIAQDIIRKTANVNVEIMGAITKNRAGKELSNFAELKQAGAIALSDDGSGVEDDAVMQAAFKESVKQDILLISHSEDSKLSAGGVMNEGLISTKLGLKPISNASEYEMVKREIQLAKGLDAKIHIAHVSTKESCEIIAKAKKQGVMVTAEATPHHFTLTDKACESFSGNTKMNPPLRSEADVEALKQALKDGTIDAIATDHAPHAVHEKEVEFDLAYFGIIGLETAFPLAYDVLVKSGLIDMAKLVGLMSLNPSKILGLKKGTLTPGADADITIVDLNKQWVYSKEEVQSLSCNSPFIGKNLQGYIEYTFVGGELKLENGTLKVKDA.

2 residues coordinate Zn(2+): H60 and H62. Substrate contacts are provided by residues 62-64 (HLR) and N94. The Zn(2+) site is built by D152, H179, and H232. N278 is a binding site for substrate. D305 lines the Zn(2+) pocket. D305 is an active-site residue. Substrate contacts are provided by residues H309 and 323–324 (FG).

Belongs to the metallo-dependent hydrolases superfamily. DHOase family. Class I DHOase subfamily. Zn(2+) is required as a cofactor.

It carries out the reaction (S)-dihydroorotate + H2O = N-carbamoyl-L-aspartate + H(+). Its pathway is pyrimidine metabolism; UMP biosynthesis via de novo pathway; (S)-dihydroorotate from bicarbonate: step 3/3. Catalyzes the reversible cyclization of carbamoyl aspartate to dihydroorotate. This Elusimicrobium minutum (strain Pei191) protein is Dihydroorotase.